The primary structure comprises 447 residues: Cellulosome-anchoring protein (447 aa).

The first 29 residues, 1–29 (MKRIKRILAVLTIFALLATINAFTFVSLA), serve as a signal peptide directing secretion. Residues 30–180 (QTNTIEIIIG…EIIEASAPEA (151 aa)) enclose the Cohesin domain. The segment at 30–180 (QTNTIEIIIG…EIIEASAPEA (151 aa)) is receptor binding site for duplicated segment of CipA. The interval 177–247 (APEATPTPGS…EHAPFLKGYP (71 aa)) is disordered. Residues 188–200 (AGSGAGGGTGSSG) show a composition bias toward gly residues. Low complexity predominate over residues 201–223 (SGQPSATPTPTATEKPSTTPKTT). SLH domains follow at residues 216 to 280 (PSTT…AGKN), 281 to 344 (SSIT…EQGT), and 345 to 408 (DVKT…GAVL). One can recognise an SLH 4; truncated domain in the interval 409–429 (EFTDVPVNYWAYKDIAEGVIY).

The protein resides in the secreted. The protein localises to the cell wall. Its subcellular location is the S-layer. Functionally, anchors the cellulosome to the cell surface by binding the duplicated segment that is present at the C-terminal end of CipA. This chain is Cellulosome-anchoring protein (ancA), found in Acetivibrio thermocellus (strain ATCC 27405 / DSM 1237 / JCM 9322 / NBRC 103400 / NCIMB 10682 / NRRL B-4536 / VPI 7372) (Clostridium thermocellum).